Here is a 187-residue protein sequence, read N- to C-terminus: Tetratricopeptide repeat protein 36 (187 aa).

TPR repeat units follow at residues 47–80 (VKDLELQGVSSAESGDLPAALQHFNQAISVLPQR), 82–114 (SAYNNRAQTKRLLGDTKGAVEDLEHAISLSNGK), and 119–152 (CQALVQRGLLLRLSGHDEEARLDFERAAALGSEF).

It belongs to the TTC36 family.

The protein is Tetratricopeptide repeat protein 36 (ttc36) of Danio rerio (Zebrafish).